Consider the following 351-residue polypeptide: Phosphoribosylformylglycinamidine cyclo-ligase (351 aa).

It belongs to the AIR synthase family.

It is found in the cytoplasm. The catalysed reaction is 2-formamido-N(1)-(5-O-phospho-beta-D-ribosyl)acetamidine + ATP = 5-amino-1-(5-phospho-beta-D-ribosyl)imidazole + ADP + phosphate + H(+). It participates in purine metabolism; IMP biosynthesis via de novo pathway; 5-amino-1-(5-phospho-D-ribosyl)imidazole from N(2)-formyl-N(1)-(5-phospho-D-ribosyl)glycinamide: step 2/2. This is Phosphoribosylformylglycinamidine cyclo-ligase from Synechococcus sp. (strain JA-3-3Ab) (Cyanobacteria bacterium Yellowstone A-Prime).